Here is a 208-residue protein sequence, read N- to C-terminus: CASP-like protein 4A4 (208 aa).

At 1–53 (MKELKDHVVVITYGPSSEASVTASPVSQQTPSLFAYSVTPSASRFSSRRASVH) the chain is on the cytoplasmic side. A helical membrane pass occupies residues 54-74 (VIGLVLRFITMVLCFVSALSL). The Extracellular portion of the chain corresponds to 75 to 92 (AVNVQRPSKRHLTQNSSS). An N-linked (GlcNAc...) asparagine glycan is attached at N89. A helical transmembrane segment spans residues 93–113 (FASYPELLYCFGVAVIGFVYT). At 114–141 (SLQTFKGVCDITHRGVLISEPLSDYISF) the chain is on the cytoplasmic side. Residues 142–162 (IFDQVICYLLVSSSSVAIAWI) form a helical membrane-spanning segment. Residues 163–176 (QHINEDAIKTLRNN) lie on the Extracellular side of the membrane. Residue N175 is glycosylated (N-linked (GlcNAc...) asparagine). The chain crosses the membrane as a helical span at residues 177-197 (SIVSVSMSFSAFLVLTLSGLL). Residues 198–208 (SGYKLCKRFMW) are Cytoplasmic-facing.

Belongs to the Casparian strip membrane proteins (CASP) family. In terms of assembly, homodimer and heterodimers.

Its subcellular location is the cell membrane. The chain is CASP-like protein 4A4 from Arabidopsis thaliana (Mouse-ear cress).